Here is a 279-residue protein sequence, read N- to C-terminus: Secreted RxLR effector protein 152 (279 aa).

An N-terminal signal peptide occupies residues 1–22 (MRNGSVLFGLFFIGHSCSVLLA). The RxLR-dEER motif lies at 47-62 (RTLQADDSERTLAEER).

The protein belongs to the RxLR effector family.

It localises to the secreted. The protein localises to the host nucleus. Secreted effector that completely suppresses the host cell death induced by cell death-inducing proteins. In Plasmopara viticola (Downy mildew of grapevine), this protein is Secreted RxLR effector protein 152.